The primary structure comprises 156 residues: Small ribosomal subunit protein uS7 (156 aa).

Belongs to the universal ribosomal protein uS7 family. As to quaternary structure, part of the 30S ribosomal subunit. Contacts proteins S9 and S11.

Functionally, one of the primary rRNA binding proteins, it binds directly to 16S rRNA where it nucleates assembly of the head domain of the 30S subunit. Is located at the subunit interface close to the decoding center, probably blocks exit of the E-site tRNA. This Campylobacter curvus (strain 525.92) protein is Small ribosomal subunit protein uS7.